The following is a 645-amino-acid chain: Glucans biosynthesis glucosyltransferase H (645 aa).

Residues 1 to 28 (MDGTVTLSPAPTDLPPVSSLDAGQPTLP) are disordered. The next 7 helical transmembrane spans lie at 64 to 84 (LIGG…SVLW), 98 to 118 (LFVL…AGFI), 423 to 443 (APMW…GAGI), 465 to 485 (AIWI…LGYI), 504 to 524 (ALSI…VMYL), 558 to 578 (SYGG…LVSP), and 580 to 600 (LAAW…VVAV).

The protein belongs to the glycosyltransferase 2 family. OpgH subfamily.

The protein localises to the cell inner membrane. It participates in glycan metabolism; osmoregulated periplasmic glucan (OPG) biosynthesis. Its function is as follows. Involved in the biosynthesis of osmoregulated periplasmic glucans (OPGs). This is Glucans biosynthesis glucosyltransferase H from Xanthomonas campestris pv. campestris (strain B100).